Reading from the N-terminus, the 366-residue chain is Alanine racemase (366 aa).

Catalysis depends on lysine 40, which acts as the Proton acceptor; specific for D-alanine. Lysine 40 carries the N6-(pyridoxal phosphate)lysine modification. Arginine 136 is a substrate binding site. Tyrosine 263 functions as the Proton acceptor; specific for L-alanine in the catalytic mechanism. Methionine 310 contacts substrate.

This sequence belongs to the alanine racemase family. Requires pyridoxal 5'-phosphate as cofactor.

It catalyses the reaction L-alanine = D-alanine. Its pathway is amino-acid biosynthesis; D-alanine biosynthesis; D-alanine from L-alanine: step 1/1. Its function is as follows. Catalyzes the interconversion of L-alanine and D-alanine. May also act on other amino acids. This is Alanine racemase (alr) from Streptococcus pyogenes serotype M2 (strain MGAS10270).